Here is a 691-residue protein sequence, read N- to C-terminus: Pleckstrin homology domain-containing family G member 7 (691 aa).

Disordered regions lie at residues 1–48 (MEKT…ISTS) and 109–140 (TSEP…LQPV). Positions 313 to 488 (MIFMNTLRYL…EGKVKWLDNF (176 aa)) constitute a DH domain. Asparagine 395 carries an N-linked (GlcNAc...) asparagine glycan. Residues 535-668 (HLLYEGKLTL…WMAQITTAIS (134 aa)) form the PH domain.

The chain is Pleckstrin homology domain-containing family G member 7 from Homo sapiens (Human).